The chain runs to 187 residues: Alpha-D-galactose-binding lectin (187 aa).

The first 37 residues, 1-37 (MTFAKQSCFNSIILLSIATSYFKIGHKISELGNRIEK), serve as a signal peptide directing secretion. The residue at position 39 (threonine 39) is an N-acetylthreonine. N-acetyl-alpha-D-galactosamine contacts are provided by residues 53 to 56 (HPKG), aspartate 64, 72 to 76 (DIHER), histidine 101, glycine 104, glutamate 112, 120 to 122 (DRH), histidine 145, glycine 148, glutamate 156, and 164 to 166 (DKH).

In terms of assembly, homodimer. In terms of tissue distribution, highest expression in the posterior part of the mantle. Highly expressed in gills and to a lesser extent in mid mantle and anterior muscle. Lowest expression in digestive gland and posterior adductor muscle. Scarcely detectable in hemocytes.

Agglutination of E.coli is inhibited by alpha-galactoside melibiose, but not by beta-galactoside lactose. In terms of biological role, alpha-D-galactose-binding lectin. Binds D-GalNAc, but not glucose or its derivatives. Has hemagglutinating activity towards rabbit erythrocytes. Agglutinates bacteria. Has bacteriostatic activity on both Gram-positive and Gram-negative bacteria including B.subtilis, S.aureus, E.coli and V.parahaemolyticus, respectively. Has a dose-dependent cytotoxic effect on the human globotriaosylceramide (Gb3)-expressing Epstein-Barr virus (EBV)-positive Burkitt's lymphoma (Raji) cell line. Has dose-dependent cytotoxic effect on another Burkitt's lymphoma (Ramos) cell line, which does not possess the EBV genome, but also expresses Gb3. Binds to Gb3 in these cells leading to phosphorylation of MEK1/2, ERK1/2, JNK and p38 kinase, activation of caspase-9/3 and to expression of p21 and tumor necrosis factor (TNF)-alpha. No cytotoxic effect on the human chronic myelogenous leukemia (K-562) cell line, which does not express Gb3. May be involved in innate immunity acting as an antibacterial or antifungal agent. May be a pattern recognition receptor (PRR) involved in recognition of glycans found on parasitic or symbiotic microorganisms. This Mytilus galloprovincialis (Mediterranean mussel) protein is Alpha-D-galactose-binding lectin.